Reading from the N-terminus, the 145-residue chain is Cell division protein SepF (145 aa).

Positions 21 to 41 (DKPQESTKAKEENVKPKHETP) are disordered. Residues 23–41 (PQESTKAKEENVKPKHETP) are compositionally biased toward basic and acidic residues.

It belongs to the SepF family. In terms of assembly, homodimer. Interacts with FtsZ.

The protein localises to the cytoplasm. Functionally, cell division protein that is part of the divisome complex and is recruited early to the Z-ring. Probably stimulates Z-ring formation, perhaps through the cross-linking of FtsZ protofilaments. Its function overlaps with FtsA. The sequence is that of Cell division protein SepF from Caldicellulosiruptor saccharolyticus (strain ATCC 43494 / DSM 8903 / Tp8T 6331).